The primary structure comprises 40 residues: Photosystem II reaction center protein J (40 aa).

The residue at position 2 (Met-2) is an N-acetylmethionine. The Cytoplasmic portion of the chain corresponds to 2–11 (MSEGGRIPLW). A helical membrane pass occupies residues 12-26 (IVATVAGMGVIVIVG). Topologically, residues 27–40 (LFFYGAYAGLGSSL) are lumenal.

The protein belongs to the PsbJ family. In terms of assembly, PSII is composed of 1 copy each of membrane proteins PsbA, PsbB, PsbC, PsbD, PsbE, PsbF, PsbH, PsbI, PsbJ, PsbK, PsbL, PsbM, PsbT, PsbX, PsbY, PsbZ, Psb30/Ycf12, peripheral proteins PsbO, CyanoQ (PsbQ), PsbU, PsbV and a large number of cofactors. It forms dimeric complexes. The cofactor is PSII binds multiple chlorophylls, carotenoids and specific lipids..

It is found in the cellular thylakoid membrane. Its function is as follows. One of the components of the core complex of photosystem II (PSII). PSII is a light-driven water:plastoquinone oxidoreductase that uses light energy to abstract electrons from H(2)O, generating O(2) and a proton gradient subsequently used for ATP formation. It consists of a core antenna complex that captures photons, and an electron transfer chain that converts photonic excitation into a charge separation. In terms of biological role, may play a regulatory role in PSII biogenesis. This Thermosynechococcus vestitus (strain NIES-2133 / IAM M-273 / BP-1) protein is Photosystem II reaction center protein J.